The following is a 425-amino-acid chain: MANTVIIGAQWGDEGKGKIVDMLSAQSRAIVRFQGGNNAGHTIKVQGEETILHLIPSGILHADKMCLIGNGVVLDPHVFLEEVDHLAAKGVDVSAARLGISKKAHLIMPYHKSLDKAREAKRASHKIGTTGRGIGPCYEDKAARVGLRAGDLANPDLVRAKVAHALQEKNTLLRDLYKFDPLDEAAVCQELLALAPRLLPYLTEVEDHIQKIQAQGGDILFEGAQGIHLDIDHGTYPFVTSSNTVSGNASAGCGVGPSALHRVVGIVKAYTTRVGSGPFPTEQLDDTGSYLRTQGHEFGATTGRPRRCGWLDAVVLRESVRLCGMTDIALTKLDVLQNLPGLRICVAYEYEGHKLDYMPQEEGALEKVTPVYEDLPGFEEDITGCTRFDDLPETVRAYIARIEELVGVKVSMVSVGAERRQTIVR.

GTP is bound by residues 12–18 (GDEGKGK) and 40–42 (GHT). Catalysis depends on Asp13, which acts as the Proton acceptor. Positions 13 and 40 each coordinate Mg(2+). IMP contacts are provided by residues 13–16 (DEGK), 38–41 (NAGH), Thr130, Arg144, Gln225, Thr240, and Arg304. The active-site Proton donor is the His41. 300–306 (ATTGRPR) provides a ligand contact to substrate. GTP is bound by residues Arg306, 332–334 (KLD), and 414–416 (SVG).

The protein belongs to the adenylosuccinate synthetase family. Homodimer. The cofactor is Mg(2+).

Its subcellular location is the cytoplasm. It carries out the reaction IMP + L-aspartate + GTP = N(6)-(1,2-dicarboxyethyl)-AMP + GDP + phosphate + 2 H(+). Its pathway is purine metabolism; AMP biosynthesis via de novo pathway; AMP from IMP: step 1/2. Functionally, plays an important role in the de novo pathway of purine nucleotide biosynthesis. Catalyzes the first committed step in the biosynthesis of AMP from IMP. The polypeptide is Adenylosuccinate synthetase (Desulfovibrio desulfuricans (strain ATCC 27774 / DSM 6949 / MB)).